A 289-amino-acid polypeptide reads, in one-letter code: Borealin (289 aa).

A required for interaction with INCENP region spans residues 1–58 (MAPKKRSSRGTRTNTLRSRKLASFLKDFDREVQVRTKQIESDRQTLLKEVENLYNIEI). Residues 1-88 (MAPKKRSSRG…NKQALEEAAK (88 aa)) are required for centromere localization. Positions 1–150 (MAPKKRSSRG…KKSHKNLRSA (150 aa)) are required for interaction with SENP3. The segment at 10 to 109 (GTRTNTLRSR…TAEAIQTPLK (100 aa)) is required to form a minimal CPC core complex that localizes to the central spindle and midbody and properly executes the role of the CPC during cytokinesis. The segment at 20 to 78 (KLASFLKDFDREVQVRTKQIESDRQTLLKEVENLYNIEILRLPKALQGMKWLDYFALGG) is required for interaction with INCENP and BIRC5. The residue at position 91 (Arg91) is a Citrulline. At Thr94 the chain carries Phosphothreonine; by TTK. Position 106 is a phosphothreonine (Thr106). Ser110 carries the post-translational modification Phosphoserine. A disordered region spans residues 122–173 (SIKEEEEEEEEGGGGGGRTKKSHKNLRSAKVKRCLPSKKRTQSIQGRGRSKR). Acidic residues predominate over residues 123–133 (IKEEEEEEEEG). Basic residues predominate over residues 139–162 (RTKKSHKNLRSAKVKRCLPSKKRT). Lys145 participates in a covalent cross-link: Glycyl lysine isopeptide (Lys-Gly) (interchain with G-Cter in SUMO2). At Ser175 the chain carries Phosphoserine. 2 positions are modified to phosphothreonine: Thr198 and Thr213. Phosphoserine occurs at positions 228, 233, 247, and 253.

It belongs to the borealin family. May form homooligomers and homodimers. Component of the chromosomal passenger complex (CPC) composed of at least BIRC5/survivin, CDCA8/borealin, INCENP, AURKB or AURKC; in the complex forms a triple-helix bundle-based subcomplex with INCENP and BIRC5. Interacts with SENP3, UBE2I and RANBP2. Interacts (phosphorylated) with SGO1 and SGO2A; the association is dependent on CDK1. Post-translationally, phosphorylated by TTK, essentially at Thr-94. Phosphorylation (probably by CDK1) promotes targeting of the CPC to centromeric DNA. Sumoylated by UBE2I and RANBP2. Desumoylated by SENP3 through the removal of SUMO2 and SUMO3. In terms of processing, citrullinated by PADI4.

It localises to the nucleus. The protein resides in the nucleolus. It is found in the cytoplasm. The protein localises to the chromosome. Its subcellular location is the centromere. It localises to the cytoskeleton. The protein resides in the spindle. Component of the chromosomal passenger complex (CPC), a complex that acts as a key regulator of mitosis. The CPC complex has essential functions at the centromere in ensuring correct chromosome alignment and segregation and is required for chromatin-induced microtubule stabilization and spindle assembly. In the complex, it may be required to direct the CPC to centromeric DNA. Major effector of the TTK kinase in the control of attachment-error-correction and chromosome alignment. The sequence is that of Borealin (Cdca8) from Mus musculus (Mouse).